The sequence spans 116 residues: Protein Rev (116 aa).

Residues Ser5 and Ser8 each carry the phosphoserine; by host CK2 modification. The tract at residues 18–26 is homomultimerization; the sequence is IIKHLYQSN. Residues 20–48 form a disordered region; that stretch reads KHLYQSNPPPKPEGTRQARRNRRRRWRER. The Nuclear localization signal and RNA-binding (RRE) motif lies at 34-50; it reads TRQARRNRRRRWRERQR. Residues 36–48 are compositionally biased toward basic residues; sequence QARRNRRRRWRER. Positions 73-84 match the Nuclear export signal and binding to XPO1 motif; it reads LQLPPLERLTLD. The segment at 91 to 116 is disordered; sequence TSGTQGVGSPQILVESPAVLESGTKE. A phosphoserine; by host mark is found at Ser92 and Ser99.

Belongs to the HIV-1 REV protein family. Homomultimer; when bound to the RRE. Multimeric assembly is essential for activity and may involve XPO1. Binds to human KPNB1, XPO1, TNPO1, RANBP5 and IPO7. Interacts with the viral Integrase. Interacts with human KHDRBS1. Interacts with human NAP1; this interaction decreases Rev multimerization and stimulates its activity. Interacts with human DEAD-box helicases DDX3 and DDX24; these interactions may serve for viral RNA export to the cytoplasm and packaging, respectively. Interacts with human PSIP1; this interaction may inhibit HIV-1 DNA integration by promoting dissociation of the Integrase-LEDGF/p75 complex. In terms of processing, asymmetrically arginine dimethylated at one site by host PRMT6. Methylation impairs the RNA-binding activity and export of viral RNA from the nucleus to the cytoplasm. Phosphorylated by protein kinase CK2. Presence of, and maybe binding to the N-terminus of the regulatory beta subunit of CK2 is necessary for CK2-mediated Rev's phosphorylation.

The protein localises to the host nucleus. It is found in the host nucleolus. The protein resides in the host cytoplasm. Functionally, escorts unspliced or incompletely spliced viral pre-mRNAs (late transcripts) out of the nucleus of infected cells. These pre-mRNAs carry a recognition sequence called Rev responsive element (RRE) located in the env gene, that is not present in fully spliced viral mRNAs (early transcripts). This function is essential since most viral proteins are translated from unspliced or partially spliced pre-mRNAs which cannot exit the nucleus by the pathway used by fully processed cellular mRNAs. Rev itself is translated from a fully spliced mRNA that readily exits the nucleus. Rev's nuclear localization signal (NLS) binds directly to KPNB1/Importin beta-1 without previous binding to KPNA1/Importin alpha-1. KPNB1 binds to the GDP bound form of RAN (Ran-GDP) and targets Rev to the nucleus. In the nucleus, the conversion from Ran-GDP to Ran-GTP dissociates Rev from KPNB1 and allows Rev's binding to the RRE in viral pre-mRNAs. Rev multimerization on the RRE via cooperative assembly exposes its nuclear export signal (NES) to the surface. Rev can then form a complex with XPO1/CRM1 and Ran-GTP, leading to nuclear export of the complex. Conversion from Ran-GTP to Ran-GDP mediates dissociation of the Rev/RRE/XPO1/RAN complex, so that Rev can return to the nucleus for a subsequent round of export. Beside KPNB1, also seems to interact with TNPO1/Transportin-1, RANBP5/IPO5 and IPO7/RANBP7 for nuclear import. The nucleoporin-like HRB/RIP is an essential cofactor that probably indirectly interacts with Rev to release HIV RNAs from the perinuclear region to the cytoplasm. The protein is Protein Rev of Human immunodeficiency virus type 1 group M subtype B (isolate CDC-451) (HIV-1).